We begin with the raw amino-acid sequence, 743 residues long: Photosystem I P700 chlorophyll a apoprotein A2 (743 aa).

The next 8 membrane-spanning stretches (helical) occupy residues 46-69 (IFATHFGHVAIIFLWASSLLFHVA), 135-158 (LYMGAVFLLILASVFLFAGWLHLQ), 175-199 (LNHHLAGLFGVSSLAWAGHLIHVAI), 273-291 (MAHHHLAIAVIFIIAGHMY), 336-359 (LHFQLGIHLAALGTITSLVAQHMY), 375-401 (AALYTHHQYIAIFLMLGAFAHGAIFWV), 423-445 (AIISHLSWVSLFLGFHTLGLYVH), and 526-544 (FLVHHAFALALHTTVLILV). Residues Cys-568 and Cys-577 each coordinate [4Fe-4S] cluster. The next 2 helical transmembrane spans lie at 584–605 (AFYLATFWALNTVGWVTFYWHW) and 652–674 (LSVWAWMFLFGHLVWATGFMFLI). Chlorophyll a-binding residues include His-663, Met-671, and Tyr-679. Trp-680 contacts phylloquinone. A helical membrane pass occupies residues 716–736 (LVGLTHFTVGYVLTYAAFLIA).

The protein belongs to the PsaA/PsaB family. In terms of assembly, the PsaA/B heterodimer binds the P700 chlorophyll special pair and subsequent electron acceptors. PSI consists of a core antenna complex that captures photons, and an electron transfer chain that converts photonic excitation into a charge separation. The cyanobacterial PSI reaction center is composed of one copy each of PsaA,B,C,D,E,F,I,J,K,L,M and X, and forms trimeric complexes. PSI electron transfer chain: 5 chlorophyll a, 1 chlorophyll a', 2 phylloquinones and 3 4Fe-4S clusters. PSI core antenna: 90 chlorophyll a, 22 carotenoids, 3 phospholipids and 1 galactolipid. P700 is a chlorophyll a/chlorophyll a' dimer, A0 is one or more chlorophyll a, A1 is one or both phylloquinones and FX is a shared 4Fe-4S iron-sulfur center. is required as a cofactor.

It localises to the cellular thylakoid membrane. It carries out the reaction reduced [plastocyanin] + hnu + oxidized [2Fe-2S]-[ferredoxin] = oxidized [plastocyanin] + reduced [2Fe-2S]-[ferredoxin]. Its function is as follows. PsaA and PsaB bind P700, the primary electron donor of photosystem I (PSI), as well as the electron acceptors A0, A1 and FX. PSI is a plastocyanin/cytochrome c6-ferredoxin oxidoreductase, converting photonic excitation into a charge separation, which transfers an electron from the donor P700 chlorophyll pair to the spectroscopically characterized acceptors A0, A1, FX, FA and FB in turn. Oxidized P700 is reduced on the lumenal side of the thylakoid membrane by plastocyanin or cytochrome c6. In Mastigocladus laminosus (Fischerella sp.), this protein is Photosystem I P700 chlorophyll a apoprotein A2.